The following is a 435-amino-acid chain: Protein phosphatase 2C homolog 2 (435 aa).

The region spanning 23–298 (IYGVSAMQGW…DNMTMIIIGL (276 aa)) is the PPM-type phosphatase domain. Mn(2+) contacts are provided by aspartate 71, glycine 72, aspartate 240, and aspartate 289. The disordered stretch occupies residues 366–435 (DQTEEDRDLP…TSGAPEKSTS (70 aa)). Basic and acidic residues predominate over residues 381–392 (ELPDSARNEREG). The segment covering 409–418 (GSSASTSEST) has biased composition (low complexity). Residues 419-435 (VTPAGSSTSGAPEKSTS) are compositionally biased toward polar residues.

The protein belongs to the PP2C family. Requires Mg(2+) as cofactor. It depends on Mn(2+) as a cofactor.

It localises to the cytoplasm. Its subcellular location is the nucleus. It catalyses the reaction O-phospho-L-seryl-[protein] + H2O = L-seryl-[protein] + phosphate. The enzyme catalyses O-phospho-L-threonyl-[protein] + H2O = L-threonyl-[protein] + phosphate. Its function is as follows. Dephosphorylating regulator for many key proteins. Dephosphorylates phosphoglycerate kinase pgk1 at least on 'Ser-203' to negatively regulate targeting of pgk1 to the mitochondrion, thereby negatively regulating production of acetyl-CoA and consequently aflatoxin biosynthesis. The chain is Protein phosphatase 2C homolog 2 from Aspergillus flavus (strain ATCC 200026 / FGSC A1120 / IAM 13836 / NRRL 3357 / JCM 12722 / SRRC 167).